Reading from the N-terminus, the 308-residue chain is MAIADGKVSLKHLVTMETLTNEEVLGMIRRGGDFKNGRADFQLDRQYFAANLFFENSTRTHKSFEVAEKKLGLDVIEFDAGTSSVNKGETLYDTILTMSALGVDICVVRHSEVDYYKQLIDSRTIQTSIVNGGDGSGQHPSQCLLDLMTIYEEFGTFGNLKICIAGDITHSRVAKSNMRILKRLGAQIYFAGPTEWYSSEFDVYGQHVAIDDVIEDLNVLMLLRVQHERHRNDKGFSKEEYHTLYGLTEERYAKLADQAIIMHPAPVNRDVEIADSLVEAPKARIVTQMQNGVFVRMAIIEAILNGKA.

Positions 59 and 60 each coordinate carbamoyl phosphate. Lys87 is a binding site for L-aspartate. Residues Arg109, His139, and Gln142 each coordinate carbamoyl phosphate. L-aspartate-binding residues include Arg172 and Arg224. Carbamoyl phosphate-binding residues include Ala265 and Pro266.

Belongs to the aspartate/ornithine carbamoyltransferase superfamily. ATCase family. Heterododecamer (2C3:3R2) of six catalytic PyrB chains organized as two trimers (C3), and six regulatory PyrI chains organized as three dimers (R2).

It carries out the reaction carbamoyl phosphate + L-aspartate = N-carbamoyl-L-aspartate + phosphate + H(+). The protein operates within pyrimidine metabolism; UMP biosynthesis via de novo pathway; (S)-dihydroorotate from bicarbonate: step 2/3. In terms of biological role, catalyzes the condensation of carbamoyl phosphate and aspartate to form carbamoyl aspartate and inorganic phosphate, the committed step in the de novo pyrimidine nucleotide biosynthesis pathway. The protein is Aspartate carbamoyltransferase catalytic subunit of Streptococcus thermophilus (strain ATCC BAA-491 / LMD-9).